The sequence spans 87 residues: Small ribosomal subunit protein uS19 (87 aa).

Belongs to the universal ribosomal protein uS19 family.

Functionally, protein S19 forms a complex with S13 that binds strongly to the 16S ribosomal RNA. The protein is Small ribosomal subunit protein uS19 (rpsS) of Mycoplasma pneumoniae (strain ATCC 29342 / M129 / Subtype 1) (Mycoplasmoides pneumoniae).